The chain runs to 408 residues: uncharacterized protein (408 aa).

4Fe-4S ferredoxin-type domains follow at residues 42-72, 78-107, 122-151, 151-181, 212-241, 233-265, 273-302, and 304-333; these read IPPI…MIYN, KLPV…MDKH, SNLI…RKEG, GKYV…VVDE, KIPH…NEKK, GEID…IYKP, ICYV…ISKE, and KLPY…VVKP. 16 residues coordinate [4Fe-4S] cluster: cysteine 52, cysteine 55, cysteine 58, cysteine 62, cysteine 87, cysteine 90, cysteine 93, cysteine 97, cysteine 131, cysteine 134, cysteine 137, cysteine 141, cysteine 160, cysteine 163, cysteine 166, and cysteine 170. 4 residues coordinate [4Fe-4S] cluster: cysteine 282, cysteine 285, cysteine 288, and cysteine 292.

This is an uncharacterized protein from Methanocaldococcus jannaschii (strain ATCC 43067 / DSM 2661 / JAL-1 / JCM 10045 / NBRC 100440) (Methanococcus jannaschii).